Consider the following 76-residue polypeptide: Exodeoxyribonuclease 7 small subunit (76 aa).

Belongs to the XseB family. Heterooligomer composed of large and small subunits.

The protein localises to the cytoplasm. It carries out the reaction Exonucleolytic cleavage in either 5'- to 3'- or 3'- to 5'-direction to yield nucleoside 5'-phosphates.. Functionally, bidirectionally degrades single-stranded DNA into large acid-insoluble oligonucleotides, which are then degraded further into small acid-soluble oligonucleotides. This Staphylococcus epidermidis (strain ATCC 35984 / DSM 28319 / BCRC 17069 / CCUG 31568 / BM 3577 / RP62A) protein is Exodeoxyribonuclease 7 small subunit.